Reading from the N-terminus, the 250-residue chain is Peptidyl-tRNA hydrolase (250 aa).

Tyrosine 14 contacts tRNA. The Proton acceptor role is filled by histidine 19. TRNA contacts are provided by phenylalanine 64, asparagine 66, and asparagine 112. The segment at 192–250 is disordered; sequence MGDGNQRPGGVKTDPAQLEKAPPKAQSHIRQARQNQKKPNIPESGPMAEMLKKLLGKKD. Positions 219–229 are enriched in polar residues; it reads HIRQARQNQKK. The segment covering 241 to 250 has biased composition (basic and acidic residues); it reads MLKKLLGKKD.

The protein belongs to the PTH family. Monomer.

It localises to the cytoplasm. It catalyses the reaction an N-acyl-L-alpha-aminoacyl-tRNA + H2O = an N-acyl-L-amino acid + a tRNA + H(+). Functionally, hydrolyzes ribosome-free peptidyl-tRNAs (with 1 or more amino acids incorporated), which drop off the ribosome during protein synthesis, or as a result of ribosome stalling. In terms of biological role, catalyzes the release of premature peptidyl moieties from peptidyl-tRNA molecules trapped in stalled 50S ribosomal subunits, and thus maintains levels of free tRNAs and 50S ribosomes. This Brucella canis (strain ATCC 23365 / NCTC 10854 / RM-666) protein is Peptidyl-tRNA hydrolase.